Reading from the N-terminus, the 218-residue chain is Uracil-DNA glycosylase (218 aa).

Belongs to the uracil-DNA glycosylase (UDG) superfamily. UNG family. Homodimer. Interacts with protein OPG148. Component of the Uracil-DNA glycosylase(UDG)-OPG148-polymerase complex; OPG148 and UDG form a heterodimeric processivity factor that associates with OPG71 to form the processive polymerase holoenzyme.

The catalysed reaction is Hydrolyzes single-stranded DNA or mismatched double-stranded DNA and polynucleotides, releasing free uracil.. Its function is as follows. Plays an essential role in viral replication as a component of the DNA polymerase processivity factor. Excises uracil residues from the DNA which can arise as a result of misincorporation of dUMP residues by DNA polymerase or due to deamination of cytosine. This is Uracil-DNA glycosylase (OPG116) from Monkeypox virus.